The primary structure comprises 202 residues: Twist-related protein 1 (202 aa).

Residues 1 to 18 (MMQDVSSSPVSPADDSLS) are compositionally biased toward low complexity. Residues 1–105 (MMQDVSSSPV…GGGSPQSYEE (105 aa)) are disordered. Positions 34–43 (RGGRKRRSSR) are enriched in basic residues. 2 stretches are compositionally biased toward gly residues: residues 46–65 (AGGG…GGDE) and 80–99 (GCGG…GGGS). The region spanning 108–159 (TQRVMANVRERQRTQSLNEAFAALRKIIPTLPSDKLSKIQTLKLAARYIDFL) is the bHLH domain. Positions 161 to 191 (QVLQSDELDSKMASCSYVAHERLSYAFSVWR) are sufficient for transactivation activity.

Efficient DNA binding requires dimerization with another bHLH protein. Homodimer or heterodimer with E proteins such as TCF3. ID1 binds preferentially to TCF3 but does not interact efficiently with TWIST1 so ID1 levels control the amount of TCF3 available to dimerize with TWIST1 and thus determine the type of dimer formed. In terms of tissue distribution, subset of mesodermal cells.

It is found in the nucleus. In terms of biological role, acts as a transcriptional regulator. Inhibits myogenesis by sequestrating E proteins, inhibiting trans-activation by MEF2, and inhibiting DNA-binding by MYOD1 through physical interaction. This interaction probably involves the basic domains of both proteins. Also represses expression of pro-inflammatory cytokines such as TNFA and IL1B. Regulates cranial suture patterning and fusion. Activates transcription as a heterodimer with E proteins. Regulates gene expression differentially, depending on dimer composition. Homodimers induce expression of FGFR2 and POSTN while heterodimers repress FGFR2 and POSTN expression and induce THBS1 expression. Heterodimerization is also required for osteoblast differentiation. Represses the activity of the circadian transcriptional activator: NPAS2-BMAL1 heterodimer. The polypeptide is Twist-related protein 1 (TWIST1) (Homo sapiens (Human)).